A 2254-amino-acid polypeptide reads, in one-letter code: Acetyl-CoA carboxylase 1 (2254 aa).

One can recognise a Biotin carboxylation domain in the interval 36–543 (PIHSILIANN…HTGWLDSRIA (508 aa)). The region spanning 189–381 (NSNLVTIPEE…LPAAQVAVGM (193 aa)) is the ATP-grasp domain. 215-272 (CQVVGYPAMIKASWGGGGKGIRKVHNDDEVRALFKQVQGEVPGSPIFIMKVASQSRHL) is an ATP binding site. E338, E352, and N354 together coordinate Mg(2+). E338, E352, and N354 together coordinate Mn(2+). R356 is a catalytic residue. In terms of domain architecture, Biotinyl-binding spans 670-744 (LQNDHDPSKL…QAGELIANLD (75 aa)). K711 is modified (N6-biotinyllysine). T1031 is subject to Phosphothreonine. Phosphoserine is present on S1192. The 340-residue stretch at 1492-1831 (QYKPLGYLDR…YVGGPLPVLA (340 aa)) folds into the CoA carboxyltransferase N-terminal domain. Residues 1492 to 2150 (QYKPLGYLDR…ESSLVKNVRE (659 aa)) form a carboxyltransferase region. Positions 1740, 2041, and 2043 each coordinate CoA. The CoA carboxyltransferase C-terminal domain maps to 1835–2150 (PPERIVEYVP…ESSLVKNVRE (316 aa)).

As to quaternary structure, homodimer. The cofactor is biotin. It depends on Mg(2+) as a cofactor. Mn(2+) serves as cofactor. Expressed in roots, trichomes, epidermal leaf cells, siliques, petals, anthers, and seeds.

It is found in the cytoplasm. Its subcellular location is the cytosol. The catalysed reaction is hydrogencarbonate + acetyl-CoA + ATP = malonyl-CoA + ADP + phosphate + H(+). It carries out the reaction N(6)-biotinyl-L-lysyl-[protein] + hydrogencarbonate + ATP = N(6)-carboxybiotinyl-L-lysyl-[protein] + ADP + phosphate + H(+). It functions in the pathway lipid metabolism; malonyl-CoA biosynthesis; malonyl-CoA from acetyl-CoA: step 1/1. Multifunctional enzyme that catalyzes the carboxylation of acetyl-CoA, forming malonyl-CoA, which is used in the plastid for fatty acid synthesis and in the cytosol in various biosynthetic pathways including fatty acid elongation. Required for very long chain fatty acids elongation. Necessary for embryo and plant development. Plays a central function in embryo morphogenesis, especially in apical meristem development. Involved in cell proliferation and tissue patterning. May act as a repressor of cytokinin response. This chain is Acetyl-CoA carboxylase 1 (ACC1), found in Arabidopsis thaliana (Mouse-ear cress).